Reading from the N-terminus, the 426-residue chain is Proline--tRNA ligase (426 aa).

It belongs to the class-II aminoacyl-tRNA synthetase family. ProS type 2 subfamily. As to quaternary structure, homodimer.

It localises to the cytoplasm. The catalysed reaction is tRNA(Pro) + L-proline + ATP = L-prolyl-tRNA(Pro) + AMP + diphosphate. Its function is as follows. Catalyzes the attachment of proline to tRNA(Pro) in a two-step reaction: proline is first activated by ATP to form Pro-AMP and then transferred to the acceptor end of tRNA(Pro). The polypeptide is Proline--tRNA ligase (Ehrlichia ruminantium (strain Gardel)).